A 246-amino-acid polypeptide reads, in one-letter code: Orotidine 5'-phosphate decarboxylase (246 aa).

Substrate-binding positions include aspartate 22, lysine 44, 71-80, threonine 130, arginine 191, glutamine 201, glycine 221, and arginine 222; that span reads DLKYHDIPHT. Residue lysine 73 is the Proton donor of the active site.

Belongs to the OMP decarboxylase family. Type 1 subfamily. In terms of assembly, homodimer.

The enzyme catalyses orotidine 5'-phosphate + H(+) = UMP + CO2. It functions in the pathway pyrimidine metabolism; UMP biosynthesis via de novo pathway; UMP from orotate: step 2/2. In terms of biological role, catalyzes the decarboxylation of orotidine 5'-monophosphate (OMP) to uridine 5'-monophosphate (UMP). This Neisseria meningitidis serogroup A / serotype 4A (strain DSM 15465 / Z2491) protein is Orotidine 5'-phosphate decarboxylase.